We begin with the raw amino-acid sequence, 496 residues long: NAD(P)H-quinone oxidoreductase subunit 2, chloroplastic (496 aa).

The next 14 membrane-spanning stretches (helical) occupy residues serine 14–valine 34, methionine 42–tryptophan 62, phenylalanine 79–phenylalanine 99, leucine 109–alanine 129, isoleucine 133–valine 153, leucine 167–leucine 187, leucine 210–valine 230, proline 244–isoleucine 264, isoleucine 281–threonine 301, arginine 305–glycine 325, leucine 334–phenylalanine 354, alanine 377–phenylalanine 397, isoleucine 400–phenylalanine 420, and isoleucine 469–phenylalanine 489.

Belongs to the complex I subunit 2 family. In terms of assembly, NDH is composed of at least 16 different subunits, 5 of which are encoded in the nucleus.

The protein resides in the plastid. The protein localises to the chloroplast thylakoid membrane. The catalysed reaction is a plastoquinone + NADH + (n+1) H(+)(in) = a plastoquinol + NAD(+) + n H(+)(out). The enzyme catalyses a plastoquinone + NADPH + (n+1) H(+)(in) = a plastoquinol + NADP(+) + n H(+)(out). In terms of biological role, NDH shuttles electrons from NAD(P)H:plastoquinone, via FMN and iron-sulfur (Fe-S) centers, to quinones in the photosynthetic chain and possibly in a chloroplast respiratory chain. The immediate electron acceptor for the enzyme in this species is believed to be plastoquinone. Couples the redox reaction to proton translocation, and thus conserves the redox energy in a proton gradient. The polypeptide is NAD(P)H-quinone oxidoreductase subunit 2, chloroplastic (Chara vulgaris (Common stonewort)).